We begin with the raw amino-acid sequence, 276 residues long: Reaction center protein L chain (276 aa).

3 consecutive transmembrane segments (helical) span residues G33–L56, G85–G113, and Y116–G141. H154 and H174 together coordinate (7R,8Z)-bacteriochlorophyll b. Residues N171–N200 form a helical membrane-spanning segment. Position 191 (H191) interacts with Fe cation. F217 lines the a ubiquinone pocket. Residues G226 to S252 form a helical membrane-spanning segment. Fe cation is bound at residue H231.

It belongs to the reaction center PufL/M/PsbA/D family. Reaction center is composed of four bacteriochlorophylls, two bacteriopheophytins, two ubiquinones, one iron, and three highly hydrophobic polypeptide chains (designated L, M, and H).

The protein localises to the cellular chromatophore membrane. The reaction center is a membrane-bound complex that mediates the initial photochemical event in the electron transfer process of photosynthesis. In Rhodospirillum rubrum, this protein is Reaction center protein L chain (pufL).